Here is a 316-residue protein sequence, read N- to C-terminus: L-lactate dehydrogenase (316 aa).

34–39 (DVVEGV) lines the NAD(+) pocket. Substrate is bound by residues Arg89, Asn121, and Arg152. Asn121 provides a ligand contact to NAD(+). His172 serves as the catalytic Proton acceptor.

The protein belongs to the LDH/MDH superfamily. LDH family. In terms of assembly, homotetramer.

The catalysed reaction is (S)-lactate + NAD(+) = pyruvate + NADH + H(+). It functions in the pathway fermentation; pyruvate fermentation to lactate; (S)-lactate from pyruvate: step 1/1. The chain is L-lactate dehydrogenase from Botryococcus braunii (Green alga).